Consider the following 721-residue polypeptide: Polyribonucleotide nucleotidyltransferase (721 aa).

2 residues coordinate Mg(2+): Asp495 and Asp501. The KH domain occupies 562-621 (PRLLSFRIDPELIGTVIGPGGRTIKGITERTNTKIDIEDSGIVTIASHDGAAAEEAQKII). Residues 631–699 (GEMFSGSITR…NRGRINLTLR (69 aa)) form the S1 motif domain. The segment at 700-721 (GVPQSGESTEVEPQPTPVAPLS) is disordered.

This sequence belongs to the polyribonucleotide nucleotidyltransferase family. The cofactor is Mg(2+).

The protein resides in the cytoplasm. It catalyses the reaction RNA(n+1) + phosphate = RNA(n) + a ribonucleoside 5'-diphosphate. Its function is as follows. Involved in mRNA degradation. Catalyzes the phosphorolysis of single-stranded polyribonucleotides processively in the 3'- to 5'-direction. The protein is Polyribonucleotide nucleotidyltransferase of Synechococcus sp. (strain CC9902).